A 787-amino-acid chain; its full sequence is LPS-assembly protein LptD (787 aa).

The disordered stretch occupies residues 1–78 (MAAGLPPLVV…AAGAAPAESG (78 aa)). Positions 59 to 78 (LPPVGTPAEPAAGAAPAESG) are enriched in low complexity.

Belongs to the LptD family. In terms of assembly, component of the lipopolysaccharide transport and assembly complex. Interacts with LptE and LptA.

In terms of biological role, together with LptE, is involved in the assembly of lipopolysaccharide (LPS) at the surface of the outer membrane. The protein is LPS-assembly protein LptD of Aromatoleum aromaticum (strain DSM 19018 / LMG 30748 / EbN1) (Azoarcus sp. (strain EbN1)).